Consider the following 444-residue polypeptide: Tol-Pal system protein TolB (444 aa).

Residues 1-26 (MNLFRSLAPMGLALALLLPAAAPALA) form the signal peptide. Residues 287-310 (ASGTRRQLTNSPSIETAPSYSPDG) are compositionally biased toward polar residues. The interval 287 to 311 (ASGTRRQLTNSPSIETAPSYSPDGS) is disordered.

It belongs to the TolB family. As to quaternary structure, the Tol-Pal system is composed of five core proteins: the inner membrane proteins TolA, TolQ and TolR, the periplasmic protein TolB and the outer membrane protein Pal. They form a network linking the inner and outer membranes and the peptidoglycan layer.

Its subcellular location is the periplasm. Part of the Tol-Pal system, which plays a role in outer membrane invagination during cell division and is important for maintaining outer membrane integrity. The protein is Tol-Pal system protein TolB of Cereibacter sphaeroides (strain ATCC 17025 / ATH 2.4.3) (Rhodobacter sphaeroides).